Consider the following 288-residue polypeptide: Protein FANTASTIC FOUR 3 (288 aa).

Residues 48 to 60 (HAEDTRNRNDDKA) are compositionally biased toward basic and acidic residues. Disordered regions lie at residues 48-100 (HAED…YYVQ), 146-172 (ETTTETRTLKSRKRSVSPSDLPPPLTT), and 222-261 (NEFVENEEETIEPEETEEYEEEEEEEEDEDEDEVMGIENV). Positions 66 to 90 (SDSSGWSSLQSLSSGSSSSTKTTTS) are enriched in low complexity. The FAF domain occupies 165–217 (DLPPPLTTMRGFQCIQMRPHRENGRLVMTATNAPPRNGCFQADRSNGRLRLSI). The span at 223–256 (EFVENEEETIEPEETEEYEEEEEEEEDEDEDEVM) shows a compositional bias: acidic residues.

It belongs to the fantastic four family. As to expression, expressed in the shoot apex, stamens, young leaves and young siliques, but not in old leaves. Detected in provascular and vascular tissue, but not in the vegetative meristem. In inflorescences, restricted to the vasculature and absent from young flowers, except from anthers.

Able to repress WUS when constitutively overexpressed, but have no effect on CLV3. In Arabidopsis thaliana (Mouse-ear cress), this protein is Protein FANTASTIC FOUR 3 (FAF3).